Reading from the N-terminus, the 118-residue chain is UPF0102 protein Arth_2474 (118 aa).

It belongs to the UPF0102 family.

In Arthrobacter sp. (strain FB24), this protein is UPF0102 protein Arth_2474.